We begin with the raw amino-acid sequence, 194 residues long: WASH complex subunit 3 (194 aa).

N-acetylmethionine is present on M1. Positions A46 to S74 form a coiled coil. Disordered stretches follow at residues V94 to N126 and S158 to D194. Residues S98–Q113 are compositionally biased toward low complexity. Residues D114–N126 are compositionally biased toward polar residues.

Belongs to the CCDC53 family. As to quaternary structure, component of the WASH core complex also described as WASH regulatory complex (SHRC) composed of WASHC1, WASHC2, WASHC3, WASHC4 and WASHC5. The WASH core complex associates via WASHC2 with the F-actin-capping protein dimer (formed by CAPZA1, CAPZA2 or CAPZA3 and CAPZB) in a transient or substoichiometric manner which was initially described as WASH complex.

It localises to the early endosome. Acts as a component of the WASH core complex that functions as a nucleation-promoting factor (NPF) at the surface of endosomes, where it recruits and activates the Arp2/3 complex to induce actin polymerization, playing a key role in the fission of tubules that serve as transport intermediates during endosome sortingg. In Mus musculus (Mouse), this protein is WASH complex subunit 3.